Here is a 156-residue protein sequence, read N- to C-terminus: 16 kDa phloem protein 1 (156 aa).

One can recognise a C2 domain in the interval Met-1–Ala-108. Positions 20, 26, 78, 80, 83, and 86 each coordinate Ca(2+).

Ca(2+) serves as cofactor.

Binds to both sense and antisense RNA. Can also bind sheared DNA and dodecamer DNA with a low affinity. Interacts with mesophyll plasmodesmata to mediate its own cell-to-cell transport and potentiate RNA trafficking. May play a role in plant defense signaling. The chain is 16 kDa phloem protein 1 from Arabidopsis thaliana (Mouse-ear cress).